The sequence spans 162 residues: Small ribosomal subunit protein uS19 (162 aa).

The span at 1–27 shows a compositional bias: basic residues; it reads MAKQKKFSGKGSARSKRKQNRKQVGPR. The segment at 1–29 is disordered; that stretch reads MAKQKKFSGKGSARSKRKQNRKQVGPRRR.

Belongs to the universal ribosomal protein uS19 family.

Its function is as follows. Protein S19 forms a complex with S13 that binds strongly to the 16S ribosomal RNA. This is Small ribosomal subunit protein uS19 from Methanococcus aeolicus (strain ATCC BAA-1280 / DSM 17508 / OCM 812 / Nankai-3).